Consider the following 357-residue polypeptide: AA9 family lytic polysaccharide monooxygenase B (357 aa).

The N-terminal stretch at 1–18 (MKFSSVLALAASAKLVAS) is a signal peptide. Cu(2+) is bound by residues H19 and H101. Positions 19–234 (HATVFAVWIN…IPGPAVWDGA (216 aa)) are catalytic. C61 and C182 form a disulfide bridge. The O2 site is built by H168 and Q177. Y179 serves as a coordination point for Cu(2+). Positions 235-318 (SSGSGSSGSG…SAAPTGGTGT (84 aa)) are ser/Thr-rich linker. A disordered region spans residues 292 to 317 (SVRPTTSAAPTTSAPTSSAAPTGGTG). Residues 295–313 (PTTSAAPTTSAPTSSAAPT) are compositionally biased toward low complexity. The CBM1 domain maps to 319–355 (GSIQIYQQCGGMNYKGATGCASGLTCKQWNPYYHQCV).

This sequence belongs to the polysaccharide monooxygenase AA9 family. Requires Cu(2+) as cofactor.

The protein resides in the secreted. The catalysed reaction is [(1-&gt;4)-beta-D-glucosyl]n+m + reduced acceptor + O2 = 4-dehydro-beta-D-glucosyl-[(1-&gt;4)-beta-D-glucosyl]n-1 + [(1-&gt;4)-beta-D-glucosyl]m + acceptor + H2O.. Lytic polysaccharide monooxygenase (LPMO) that depolymerizes crystalline and amorphous polysaccharides via the oxidation of scissile alpha- or beta-(1-4)-glycosidic bonds, yielding C4 oxidation products. Catalysis by LPMOs requires the reduction of the active-site copper from Cu(II) to Cu(I) by a reducing agent and H(2)O(2) or O(2) as a cosubstrate. Active on carboxymethylcellulose (CMC), hydroxyethylcellulose (HEC) and beta-glucan. Also active on soluble cellohexaose, a property that is restricted to only a few characterized LPMOs. This Emericella nidulans (strain FGSC A4 / ATCC 38163 / CBS 112.46 / NRRL 194 / M139) (Aspergillus nidulans) protein is AA9 family lytic polysaccharide monooxygenase B.